The primary structure comprises 437 residues: Septin-7 (437 aa).

Serine 2 is subject to N-acetylserine. Tyrosine 30 carries the post-translational modification Phosphotyrosine. In terms of domain architecture, Septin-type G spans 47 to 316 (RGFEFTLMVV…ENYRSRKLAA (270 aa)). The segment at 47-317 (RGFEFTLMVV…NYRSRKLAAV (271 aa)) is interaction with SEPTIN12. The G1 motif stretch occupies residues 57-64 (GESGLGKS). 57-64 (GESGLGKS) provides a ligand contact to GTP. Serine 77 is modified (phosphoserine). Residues threonine 90, glycine 116, and 195–203 (KADTLTPEE) each bind GTP. The segment at 113–116 (DTPG) is G3 motif. Residues 194–197 (AKAD) form a G4 motif region. Threonine 228 carries the phosphothreonine modification. Residues glycine 250 and arginine 265 each contribute to the GTP site. The stretch at 332–433 (TKSPLAQMEE…SRTLEKNKKK (102 aa)) forms a coiled coil. Phosphoserine is present on serine 334. Lysine 373 carries the N6-acetyllysine modification. A compositionally biased stretch (basic and acidic residues) spans 378-410 (ELQRRHEQMKKNLEAQHKELEEKRRQFEDEKAN). The interval 378–437 (ELQRRHEQMKKNLEAQHKELEEKRRQFEDEKANWEAQQRILEQQNSSRTLEKNKKKGKIF) is disordered. A Phosphoserine modification is found at serine 424. Position 426 is a phosphothreonine (threonine 426).

This sequence belongs to the TRAFAC class TrmE-Era-EngA-EngB-Septin-like GTPase superfamily. Septin GTPase family. In terms of assembly, septins polymerize into heterooligomeric protein complexes that form filaments, and associate with cellular membranes, actin filaments and microtubules. GTPase activity is required for filament formation. Filaments are assembled from asymmetrical heterotrimers, composed of SEPTIN2, SEPTIN6 and SEPTIN7 that associate head-to-head to form a hexameric unit. Within the trimer, directly interacts with SEPTIN6, while interaction with SEPTIN2 seems indirect. In the absence of SEPTIN6, forms homodimers. Interacts directly with CENPE and links CENPE to septin filaments composed of SEPTIN2, SEPTIN6 and SEPTIN7. Interacts with SEPTIN5, SEPTIN8, SEPTIN9 and SEPTIN11. Component of a septin core octameric complex consisting of SEPTIN12, SEPTIN7, SEPTIN6 and SEPTIN2 or SEPTIN4 in the order 12-7-6-2-2-6-7-12 or 12-7-6-4-4-6-7-12 and located in the sperm annulus; the SEPTIN12:SEPTIN7 association is mediated by the respective GTP-binding domains.

It localises to the cytoplasm. The protein resides in the chromosome. It is found in the centromere. The protein localises to the kinetochore. Its subcellular location is the cytoskeleton. It localises to the spindle. The protein resides in the cleavage furrow. It is found in the midbody. The protein localises to the cilium axoneme. Its subcellular location is the cell projection. It localises to the cilium. The protein resides in the flagellum. Its function is as follows. Filament-forming cytoskeletal GTPase. Required for normal organization of the actin cytoskeleton. Required for normal progress through mitosis. Involved in cytokinesis. Required for normal association of CENPE with the kinetochore. Plays a role in ciliogenesis and collective cell movements. Forms a filamentous structure with SEPTIN12, SEPTIN6, SEPTIN2 and probably SEPTIN4 at the sperm annulus which is required for the structural integrity and motility of the sperm tail during postmeiotic differentiation. This Bos taurus (Bovine) protein is Septin-7.